We begin with the raw amino-acid sequence, 230 residues long: Cysteine S-methyltransferase OspZ (230 aa).

Positions glycine 49–arginine 52 are interaction with host proteins TAB2, TAB3 and ZRANB3. S-adenosyl-L-methionine is bound by residues alanine 92, serine 98, arginine 107, glutamine 111, tyrosine 204, and glutamate 208.

This sequence belongs to the NleE/OspZ family. In terms of assembly, monomer.

The protein resides in the secreted. It localises to the host cytoplasm. Its subcellular location is the host nucleus. It carries out the reaction L-cysteinyl-[protein] + S-adenosyl-L-methionine = S-methyl-L-cysteinyl-[protein] + S-adenosyl-L-homocysteine + H(+). In terms of biological role, cysteine methyltransferase effector that inhibits host cell NF-kappa-B activation by preventing nuclear translocation of host protein RELA/p65. Acts by mediating cysteine methylation of host proteins TAB2 and TAB3: methylation of a conserved cysteine residue of the RanBP2-type zinc finger (NZF) of TAB2 and TAB3 disrupts zinc-binding, thereby inactivating the ubiquitin chain-binding activity of TAB2 and TAB3, leading to NF-kappa-B inactivation. Also mediates cysteine methylation of host protein ZRANB3, inactivating its ability to bind ubiquitin chains. In Shigella boydii, this protein is Cysteine S-methyltransferase OspZ.